The chain runs to 720 residues: MLCRALLLRAAGHRQSSSLPLQHLLDGYRCSREDDHLSYGEIGMPVPPFGCSFSAAPNFEHVLAVANEEGFVRLYDTEAQNTTKLISKEWQAHSNAVFDLAWVPGEHRIVTASGDQTAKVWDVRAGELLGICKGHQCSLKSVAFSRFEKAVFCTGGRDGNIMVWDTRCNKKDGFYRQVNQISGAHNVVDRQTPSKLRKKRQNLRGLAPLVDFQQSVTVVLLQDEHTLISAGAVDGVIKVWDLRKNYAAYRQDPVPSKSFFYPGTSTRKLGYSSLVLDSTGANLFANCTDDSIYMFNMTSLKTFPVAVFSGHQNSTFYIKSSISPDDQFLVSGSSDCNAYIWKVSEPSLPPRILVGHSQEVTSIAWCPSDFTKIATCSDDNTVRIWRLQHYPEEEKSVSNKAKLVGWVTQKKPEEQRGAGRSASPQSTPAKAFSVGSPCASSPRPAACAPSYSGDLPLSTNTPTVSLKTQMATACTPAKLSGASPRTSPKLVPSSKMSIKHWIARTPCSSPEVGKKTPSPRKALAEVTQSLLETSSTPKAQHSQAEKRAKRRLDCSKEDEAGQKCLQDCSCVTELDHVAKKSKLNLCHLAAGQRACDEGSLSLADLDNEHEDSTHSPKELSFPGSLVNPSGTQTPPPVLQSPCERDSDVVDKENSSPERKNWLSALGEKLRTGKAGSPPSSYTSSAKRQEAAVVTTSPKTAVNTSVSMRKICTYFHRKPQN.

WD repeat units lie at residues 43 to 85 (GMPV…TTKL), 92 to 131 (AHSN…LLGI), and 134 to 174 (GHQC…KDGF). The DDB1-binding motif motif lies at 164-167 (WDTR). The Nuclear localization signal signature appears at 193–200 (PSKLRKKR). 4 WD repeats span residues 211–250 (DFQQ…AAYR), 266–305 (TRKL…TFPV), 310–351 (GHQN…LPPR), and 355–395 (GHSQ…EEEK). The DDB1-binding motif motif lies at 240-243 (WDLR). Disordered regions lie at residues 411–437 (KPEE…VGSP), 476–495 (PAKL…PSSK), 528–552 (QSLL…KRRL), and 607–698 (NEHE…TSPK). Positions 528 to 542 (QSLLETSSTPKAQHS) are enriched in polar residues. Composition is skewed to basic and acidic residues over residues 543-552 (QAEKRAKRRL) and 642-660 (CERD…ERKN).

It belongs to the WD repeat cdt2 family. As to quaternary structure, component of the DCX(DTL) E3 ubiquitin ligase complex, at least composed of CUL4 (CUL4A or CUL4B), DDB1, DTL/CDT2 and RBX1.

The protein resides in the nucleus. It is found in the cytoplasm. Its subcellular location is the cytoskeleton. It localises to the microtubule organizing center. The protein localises to the centrosome. The protein resides in the chromosome. The protein operates within protein modification; protein ubiquitination. Substrate-specific adapter of a DCX (DDB1-CUL4-X-box) E3 ubiquitin-protein ligase complex required for cell cycle control, DNA damage response and translesion DNA synthesis. The DCX(DTL) complex, also named CRL4(CDT2) complex, mediates the polyubiquitination and subsequent degradation of CDT1, CDKN1A/p21(CIP1), KMT5A and SDE2. CDT1 degradation in response to DNA damage is necessary to ensure proper cell cycle regulation of DNA replication. CDKN1A/p21(CIP1) degradation during S phase or following UV irradiation is essential to control replication licensing. KMT5A degradation is also important for a proper regulation of mechanisms such as TGF-beta signaling, cell cycle progression, DNA repair and cell migration. Most substrates require their interaction with PCNA for their polyubiquitination: substrates interact with PCNA via their PIP-box, and those containing the 'K+4' motif in the PIP box, recruit the DCX(DTL) complex, leading to their degradation. In undamaged proliferating cells, the DCX(DTL) complex also promotes the 'Lys-164' monoubiquitination of PCNA, thereby being involved in PCNA-dependent translesion DNA synthesis. May play a role in the regulation of the circadian clock. In Gallus gallus (Chicken), this protein is Denticleless protein homolog (DTL).